Here is a 480-residue protein sequence, read N- to C-terminus: RNA-splicing ligase RtcB homolog (480 aa).

Mn(2+) contacts are provided by Asp-93, Cys-96, His-202, His-234, and His-328. Residue 201 to 205 participates in GMP binding; the sequence is NHYTE. GMP-binding positions include 328-329, 377-380, Ser-384, 403-406, and Lys-479; these read HN, GGTM, and HGAG. His-403 (GMP-histidine intermediate) is an active-site residue.

Belongs to the RtcB family. In terms of assembly, catalytic component of the tRNA-splicing ligase complex. The cofactor is Mn(2+).

It catalyses the reaction a 3'-end 3'-phospho-ribonucleotide-RNA + a 5'-end dephospho-ribonucleoside-RNA + GTP = a ribonucleotidyl-ribonucleotide-RNA + GMP + diphosphate. The catalysed reaction is a 3'-end 2',3'-cyclophospho-ribonucleotide-RNA + a 5'-end dephospho-ribonucleoside-RNA + GTP + H2O = a ribonucleotidyl-ribonucleotide-RNA + GMP + diphosphate + H(+). Catalytic subunit of the tRNA-splicing ligase complex that acts by directly joining spliced tRNA halves to mature-sized tRNAs by incorporating the precursor-derived splice junction phosphate into the mature tRNA as a canonical 3',5'-phosphodiester. May act as an RNA ligase with broad substrate specificity, and may function toward other RNAs. This Thalassiosira pseudonana (Marine diatom) protein is RNA-splicing ligase RtcB homolog.